The chain runs to 279 residues: Undecaprenyl-diphosphatase (279 aa).

Transmembrane regions (helical) follow at residues 2–22 (LIIE…TEWL), 44–64 (AFIE…VMLI), 85–105 (WQLW…AVPL), 113–133 (FYFM…FIWI), 163–183 (VLSI…AIIL), 188–208 (TVAA…YSGL), 223–243 (AQVL…LLAI), and 255–275 (FTIF…YSFF).

Belongs to the UppP family.

Its subcellular location is the cell membrane. The enzyme catalyses di-trans,octa-cis-undecaprenyl diphosphate + H2O = di-trans,octa-cis-undecaprenyl phosphate + phosphate + H(+). In terms of biological role, catalyzes the dephosphorylation of undecaprenyl diphosphate (UPP). Confers resistance to bacitracin. The sequence is that of Undecaprenyl-diphosphatase from Streptococcus pyogenes serotype M12 (strain MGAS2096).